A 156-amino-acid polypeptide reads, in one-letter code: Nascent polypeptide-associated complex subunit beta (156 aa).

2 disordered regions span residues 1-42 (MPID…KDDT) and 129-156 (QANE…AEVE). The NAC-A/B domain occupies 38–103 (NKDDTKLHNQ…AQEKNLQELF (66 aa)).

It belongs to the NAC-beta family. Part of the nascent polypeptide-associated complex (NAC), consisting of EGD2 and EGD1. NAC associates with ribosomes via EGD1.

It is found in the cytoplasm. Its subcellular location is the nucleus. Component of the nascent polypeptide-associated complex (NAC), a dynamic component of the ribosomal exit tunnel, protecting the emerging polypeptides from interaction with other cytoplasmic proteins to ensure appropriate nascent protein targeting. The NAC complex also promotes mitochondrial protein import by enhancing productive ribosome interactions with the outer mitochondrial membrane and blocks the inappropriate interaction of ribosomes translating non-secretory nascent polypeptides with translocation sites in the membrane of the endoplasmic reticulum. EGD1 may act as a transcription factor that exert a negative effect on the expression of several genes that are transcribed by RNA polymerase II. This chain is Nascent polypeptide-associated complex subunit beta (EGD1), found in Candida glabrata (strain ATCC 2001 / BCRC 20586 / JCM 3761 / NBRC 0622 / NRRL Y-65 / CBS 138) (Yeast).